A 642-amino-acid chain; its full sequence is Glutamyl-tRNA(Gln) amidotransferase subunit E (642 aa).

It belongs to the GatB/GatE family. GatE subfamily. Heterodimer of GatD and GatE.

It catalyses the reaction L-glutamyl-tRNA(Gln) + L-glutamine + ATP + H2O = L-glutaminyl-tRNA(Gln) + L-glutamate + ADP + phosphate + H(+). Allows the formation of correctly charged Gln-tRNA(Gln) through the transamidation of misacylated Glu-tRNA(Gln) in organisms which lack glutaminyl-tRNA synthetase. The reaction takes place in the presence of glutamine and ATP through an activated gamma-phospho-Glu-tRNA(Gln). The GatDE system is specific for glutamate and does not act on aspartate. This Aeropyrum pernix (strain ATCC 700893 / DSM 11879 / JCM 9820 / NBRC 100138 / K1) protein is Glutamyl-tRNA(Gln) amidotransferase subunit E.